Reading from the N-terminus, the 177-residue chain is Large ribosomal subunit protein uL6 (177 aa).

This sequence belongs to the universal ribosomal protein uL6 family. Part of the 50S ribosomal subunit.

This protein binds to the 23S rRNA, and is important in its secondary structure. It is located near the subunit interface in the base of the L7/L12 stalk, and near the tRNA binding site of the peptidyltransferase center. This is Large ribosomal subunit protein uL6 from Proteus mirabilis (strain HI4320).